Consider the following 54-residue polypeptide: Movement protein p6 (54 aa).

Residues 1–10 (MDCVLRSYLL) lie on the Lumenal side of the membrane. The chain crosses the membrane as a helical span at residues 11 to 31 (LAFGFLICLFLFCLVVFIWFV). Topologically, residues 32–54 (YKQILFRTTAQSNEARHNHSTVV) are cytoplasmic.

Homodimer; disulfide-linked.

It localises to the host rough endoplasmic reticulum membrane. Transports viral genome to neighboring plant cells directly through plasmosdesmata, without any budding. The movement protein allows efficient cell to cell propagation, by bypassing the host cell wall barrier. Two movement proteins, p6, Hsp70h and three structural proteins, CP, CPm, and P64 are essential for cell-cell movement. Also plays a role in virion formation. Together with CPm and p64, encapsidates the 5'-terminal portion of the viral genome. This is Movement protein p6 from Beet yellows virus (isolate Ukraine) (BYV).